A 441-amino-acid polypeptide reads, in one-letter code: Baicalein 7-O-glucuronosyltransferase (441 aa).

This sequence belongs to the UDP-glycosyltransferase family. In terms of assembly, homodimer.

The enzyme catalyses baicalein + UDP-alpha-D-glucuronate = baicalin + UDP. Its activity is regulated as follows. Inhibited by copper, zinc and iron, p-Chloromercuri-benzoic acid (PCMBA) and 4,4'-diisothiocyanostilbene-2,2'-disulfonic acid (DIDS), but not by N-ethylmaleimide (NEM), dithioerythritol (DTE), calcium or magnesium. In terms of biological role, involved in the production of glucuronosylated baicalein, a flavonoid that shows antiallergic, anti-HIV and antitumor activities. Can use baicalein, scutellarein and wogonin as substrates, but not chrysin, apigenin, luteolin, quercetin, formononetin and daidzein. Highly specific for UDP-glucuronate (UDP-GlcUA) and no activity with UDP-glucose or UDP-galacturonic acid. This chain is Baicalein 7-O-glucuronosyltransferase (UBGAT-I), found in Scutellaria baicalensis (Baical skullcap).